Consider the following 643-residue polypeptide: MADELNEFQEAGNFNEEALMRLSNVCARLRRMQMLESDVEITVVDGELKRVPRQMEKVKDGQVENNAGGFVFPVSDETQVRRFLILGSDKGSYHQSSEKITIDNAQRIIKIIEQGNGHMVLKELALINAENRNPKMNAMIFTLAICARISTHDTTKKTECPMLNAYSDYIRALHDSALDLIPEVCRTPTHLFEFVDYCQTISESTKAGGAKSSTGWGRSMRNAISKWYTTKTTEKLAMLLTKYPQREGWSHRDLFRLAHPNLMDSRSHGQSEDRLEREQLFRFAVKGDLVKRKRKMSVEEVAEVEKVWDKKALKLPYTEEQLIKEEQSRALNLVEAYLKLKNEQSEEVIVAAIKKHGLVREHLPTTSLNSKLVWETLFDVSMPMTAMIRNLAKMTVVGALDEKRVDNIVKRLTDQEELRRSRIHPINLLTARAVYAQGRGDKGSLTWEPNQKICDALEAGFYKAFVNAPPTGKRYCLALDVSGSMTSRVSSSPLSCREAATGMSLINLHNEAEVRCVAFCDKLTELPFTKDWKIGQVNDYVNNLDFGRTDCGLPMTWATENNLKFDVFIIYTDNDTWAGEIHPFEAIKKYREASGIHDAKVIVMAMQAYDYSIADPSDAGMLDITGFDSAVPQIVHEFVTGKI.

The TROVE domain occupies 63–473 (VENNAGGFVF…AFVNAPPTGK (411 aa)). An RNA-binding region spans residues 186 to 390 (RTPTHLFEFV…SMPMTAMIRN (205 aa)). Positions 465–643 (FVNAPPTGKR…IVHEFVTGKI (179 aa)) are VWFA-like domain. Residues serine 482, serine 484, and threonine 549 each contribute to the a divalent metal cation site.

It belongs to the Ro 60 kDa family.

The protein resides in the cytoplasm. Its function is as follows. RNA-binding protein that binds to misfolded non-coding RNAs, pre-5S rRNA, and several small cytoplasmic RNA molecules known as Y RNAs. This chain is RNA-binding protein RO60, found in Caenorhabditis elegans.